We begin with the raw amino-acid sequence, 308 residues long: Urease subunit beta (308 aa).

The region spanning 131–308 (GGIDTHIHFI…STNPTIPFTK (178 aa)) is the Urease domain. Residues His-136, His-138, Lys-219, His-248, and His-274 each contribute to the Ni(2+) site. Lys-219 is modified (N6-carboxylysine).

The protein belongs to the metallo-dependent hydrolases superfamily. Urease alpha subunit family. As to quaternary structure, heterohexamer of 3 UreA (alpha) and 3 UreB (beta) subunits. Ni cation serves as cofactor. In terms of processing, carboxylation allows a single lysine to coordinate two nickel ions.

The protein localises to the cytoplasm. The catalysed reaction is urea + 2 H2O + H(+) = hydrogencarbonate + 2 NH4(+). The protein operates within nitrogen metabolism; urea degradation; CO(2) and NH(3) from urea (urease route): step 1/1. The sequence is that of Urease subunit beta (ureB) from Helicobacter mustelae.